The primary structure comprises 380 residues: Variant-surface-glycoprotein phospholipase C (380 aa).

The region spanning 31-205 (ITQVCFVGSH…SRRRIFLVVG (175 aa)) is the PI-PLC X-box domain.

In terms of assembly, monomer.

It localises to the membrane. It carries out the reaction a 6-(alpha-D-glucosaminyl)-1-(1,2-diacyl-sn-glycero-3-phospho)-1D-myo-inositol = 6-(alpha-D-glucosaminyl)-1D-myo-inositol 1,2-cyclic phosphate + a 1,2-diacyl-sn-glycerol. By hydrolysis of the attached glycolipid, releases soluble variant surface glycoprotein containing phosphoinositol from the cell wall of T.brucei after cell lysis. It also cleaves similar membrane anchors on some mammalian proteins. VSG lipase may play a role in processes such as parasite differentiation or antigenic variation. The polypeptide is Variant-surface-glycoprotein phospholipase C (Trypanosoma cruzi).